A 78-amino-acid polypeptide reads, in one-letter code: Esculentin-2ISa (78 aa).

The first 22 residues, 1–22 (MFTLKKSLLLLFFLGTISLSVC), serve as a signal peptide directing secretion. Residues 23 to 39 (KQERDADYEDKGEVEEV) constitute a propeptide, removed in mature form. The cysteines at positions 72 and 78 are disulfide-linked.

As to expression, expressed by the skin glands.

Its subcellular location is the secreted. In terms of biological role, has antimicrobial activity against Gram-negative bacterium E.coli ATCC 8739 (MIC=12.5 ug), against Gram positive bacteria S.aureus ATCC 6538 (MIC=3.1 ug), methicillin-resistant S.aureus ATCC 43300 (MIC=25 ug), B.subtilis ATCC 6633 (MIC=6.3 ug) and against fungus C.albicans ATCC 90028 (MIC=100 ug). This chain is Esculentin-2ISa, found in Odorrana ishikawae (Ishikawa's frog).